The following is a 101-amino-acid chain: Replication restart protein PriB (101 aa).

In terms of domain architecture, SSB spans 1–101; sequence MTTNNLVLSG…IHAENVELKT (101 aa).

It belongs to the PriB family. As to quaternary structure, homodimer. Interacts with PriA and DnaT. Component of the replication restart primosome. Primosome assembly occurs via a 'hand-off' mechanism. PriA binds to replication forks, subsequently PriB then DnaT bind; DnaT then displaces ssDNA to generate the helicase loading substrate.

In terms of biological role, involved in the restart of stalled replication forks, which reloads the replicative helicase on sites other than the origin of replication; the PriA-PriB pathway is the major replication restart pathway. During primosome assembly it facilitates complex formation between PriA and DnaT on DNA; stabilizes PriA on DNA. Stimulates the DNA unwinding activity of PriA helicase. The sequence is that of Replication restart protein PriB from Shewanella baltica (strain OS223).